Consider the following 98-residue polypeptide: NADH-ubiquinone oxidoreductase chain 4L (98 aa).

The next 3 helical transmembrane spans lie at 1–21, 26–46, and 61–81; these read MTPTHMNITLAFTISLLGMLI, LMASLLCLEGMMMSLFIMTAV, and IIMLVFAACEAAVGLALLVSI.

It belongs to the complex I subunit 4L family. As to quaternary structure, core subunit of respiratory chain NADH dehydrogenase (Complex I) which is composed of 45 different subunits.

The protein resides in the mitochondrion inner membrane. The catalysed reaction is a ubiquinone + NADH + 5 H(+)(in) = a ubiquinol + NAD(+) + 4 H(+)(out). Core subunit of the mitochondrial membrane respiratory chain NADH dehydrogenase (Complex I) which catalyzes electron transfer from NADH through the respiratory chain, using ubiquinone as an electron acceptor. Part of the enzyme membrane arm which is embedded in the lipid bilayer and involved in proton translocation. This Papio hamadryas (Hamadryas baboon) protein is NADH-ubiquinone oxidoreductase chain 4L (MT-ND4L).